We begin with the raw amino-acid sequence, 224 residues long: uncharacterized protein (224 aa).

Residues 44–139 (TSPPIVPLPT…PSPPPSPSPL (96 aa)) show a composition bias toward pro residues. The disordered stretch occupies residues 44 to 145 (TSPPIVPLPT…PSPLGEPMYY (102 aa)).

This is an uncharacterized protein from Lepidoptera (butterflies and moths).